We begin with the raw amino-acid sequence, 359 residues long: 3-dehydroquinate synthase (359 aa).

Residues 71–76 (DGEAYK), 105–109 (GVIGD), 129–130 (TT), Lys-142, and Lys-151 contribute to the NAD(+) site. Residues Glu-184, His-247, and His-264 each coordinate Zn(2+).

Belongs to the sugar phosphate cyclases superfamily. Dehydroquinate synthase family. The cofactor is Co(2+). It depends on Zn(2+) as a cofactor. NAD(+) serves as cofactor.

The protein resides in the cytoplasm. The catalysed reaction is 7-phospho-2-dehydro-3-deoxy-D-arabino-heptonate = 3-dehydroquinate + phosphate. The protein operates within metabolic intermediate biosynthesis; chorismate biosynthesis; chorismate from D-erythrose 4-phosphate and phosphoenolpyruvate: step 2/7. Its function is as follows. Catalyzes the conversion of 3-deoxy-D-arabino-heptulosonate 7-phosphate (DAHP) to dehydroquinate (DHQ). The sequence is that of 3-dehydroquinate synthase from Burkholderia ambifaria (strain ATCC BAA-244 / DSM 16087 / CCUG 44356 / LMG 19182 / AMMD) (Burkholderia cepacia (strain AMMD)).